A 346-amino-acid chain; its full sequence is MEYLKDISSSLSGWEFNFAPGWQSVTASVLLVAGGWFVVSRVWTFLRVLTSLFVLPGKSLRSFGPKGSWAIVTGASDGLGKEFALQIARAGYNIVLVSRTASKLTALTDEITSKYPSVQTKMLAMDFARNLDEDYEKLKALIQDLDVAILINNVGKSHSIPVPFALTPEDELADIITINCMGTLRVTQLVVPGMTQRKRGLILTMGSFGGLVPSPLLATYSGSKAFLQQWSTALGSELQPYGITVELVQAYLITSAMSKIRKTSALIPNPRAFVKATLSKIGNNGGSPGYAYSSSPYWSHGLVAYLATCVINPMSKWLANQNKAMHESIRKRALRKAERENAKKSS.

A helical membrane pass occupies residues 26 to 46 (TASVLLVAGGWFVVSRVWTFL). 8 residues coordinate NADP(+): Ile-71, Asp-126, Asp-134, Asn-153, Tyr-220, Lys-224, Ile-253, and Ser-255. Tyr-220 acts as the Proton donor in catalysis. Lys-224 (lowers pKa of active site Tyr) is an active-site residue.

Belongs to the short-chain dehydrogenases/reductases (SDR) family.

The protein resides in the endoplasmic reticulum membrane. It catalyses the reaction a very-long-chain (3R)-3-hydroxyacyl-CoA + NADP(+) = a very-long-chain 3-oxoacyl-CoA + NADPH + H(+). Its pathway is lipid metabolism; fatty acid biosynthesis. Functionally, component of the microsomal membrane bound fatty acid elongation system, which produces the 26-carbon very long-chain fatty acids (VLCFA) from palmitate. Catalyzes the reduction of the 3-ketoacyl-CoA intermediate that is formed in each cycle of fatty acid elongation. VLCFAs serve as precursors for ceramide and sphingolipids. The polypeptide is Very-long-chain 3-oxoacyl-CoA reductase (Emericella nidulans (strain FGSC A4 / ATCC 38163 / CBS 112.46 / NRRL 194 / M139) (Aspergillus nidulans)).